The primary structure comprises 157 residues: uncharacterized protein (157 aa).

This is an uncharacterized protein from Lepidoptera (butterflies and moths).